The sequence spans 416 residues: Inositol polyphosphate multikinase (416 aa).

A disordered region spans residues 1 to 38 (MATEPPSPLRVEAPGPPEMRTSPAIESTPEGTPQPAGG). The residue at position 2 (Ala-2) is an N-acetylalanine. The residue at position 7 (Ser-7) is a Phosphoserine. Lys-75 lines the ATP pocket. Arg-82 contacts substrate. ATP-binding positions include 131–133 (EDV) and Asp-144. Substrate contacts are provided by residues Lys-146, 160–167 (KIQQQVSK), and Gln-196. Positions 320–330 (RHRKIYTKKHH) match the Nuclear localization signal motif. Position 385 (Asp-385) interacts with ATP. His-388 provides a ligand contact to substrate.

Belongs to the inositol phosphokinase (IPK) family. Requires Mg(2+) as cofactor. Ubiquitous, with the highest expression in skeletal muscle, liver, placenta, lung, peripheral blood leukocytes, kidney, spleen and colon.

The protein localises to the nucleus. The enzyme catalyses 1D-myo-inositol 1,4,5-trisphosphate + 2 ATP = 1D-myo-inositol 1,3,4,5,6-pentakisphosphate + 2 ADP + 2 H(+). It catalyses the reaction 1D-myo-inositol 1,3,4,6-tetrakisphosphate + ATP = 1D-myo-inositol 1,3,4,5,6-pentakisphosphate + ADP + H(+). It carries out the reaction 1-octadecanoyl-2-(5Z,8Z,11Z,14Z)-eicosatetraenoyl-sn-glycero-3-phospho-1D-myo-inositol 4,5-bisphosphate + ATP = 1-octadecanoyl-2-(5Z,8Z,11Z,14Z-eicosatetraenoyl)-sn-glycero-3-phospho-(1D-myo-inositol 3,4,5-triphosphate) + ADP + H(+). The catalysed reaction is a 1,2-diacyl-sn-glycero-3-phospho-(1D-myo-inositol-4,5-bisphosphate) + ATP = a 1,2-diacyl-sn-glycero-3-phospho-(1D-myo-inositol-3,4,5-trisphosphate) + ADP + H(+). The enzyme catalyses 1D-myo-inositol 1,4,5,6-tetrakisphosphate + ATP = 1D-myo-inositol 1,3,4,5,6-pentakisphosphate + ADP + H(+). Its pathway is phospholipid metabolism; phosphatidylinositol metabolism. Inhibited by flavonoids that occupy the ATP-binding pocket. Inhibited by myricetin, quercetin, luteolin, kaempferol, isorhamnetin and diosmetin, and to a lesser degree by rhamnetin and apigenin. Functionally, inositol phosphate kinase with a broad substrate specificity. Phosphorylates inositol 1,4,5-trisphosphate (Ins(1,4,5)P3) first to inositol 1,3,4,5-tetrakisphosphate and then to inositol 1,3,4,5,6-pentakisphosphate (Ins(1,3,4,5,6)P5). Phosphorylates inositol 1,3,4,6-tetrakisphosphate (Ins(1,3,4,6)P4). Phosphorylates inositol 1,4,5,6-tetrakisphosphate (Ins(1,4,5,6)P4). Phosphorylates glycero-3-phospho-1D-myo-inositol 4,5-bisphosphate to glycero-3-phospho-1D-myo-inositol 3,4,5-trisphosphate. Plays an important role in MLKL-mediated necroptosis via its role in the biosynthesis of inositol pentakisphosphate (InsP5) and inositol hexakisphosphate (InsP6). Binding of these highly phosphorylated inositol phosphates to MLKL mediates the release of an N-terminal auto-inhibitory region, leading to activation of the kinase. Essential for activated phospho-MLKL to oligomerize and localize to the cell membrane during necroptosis. Required for normal embryonic development, probably via its role in the biosynthesis of inositol 1,3,4,5,6-pentakisphosphate (Ins(1,3,4,5,6)P5) and inositol hexakisphosphate (InsP6). This chain is Inositol polyphosphate multikinase (IPMK), found in Homo sapiens (Human).